We begin with the raw amino-acid sequence, 343 residues long: N-acetyl-gamma-glutamyl-phosphate reductase (343 aa).

Cysteine 146 is a catalytic residue.

The protein belongs to the NAGSA dehydrogenase family. Type 1 subfamily.

It localises to the cytoplasm. It carries out the reaction N-acetyl-L-glutamate 5-semialdehyde + phosphate + NADP(+) = N-acetyl-L-glutamyl 5-phosphate + NADPH + H(+). Its pathway is amino-acid biosynthesis; L-arginine biosynthesis; N(2)-acetyl-L-ornithine from L-glutamate: step 3/4. In terms of biological role, catalyzes the NADPH-dependent reduction of N-acetyl-5-glutamyl phosphate to yield N-acetyl-L-glutamate 5-semialdehyde. This Acidothermus cellulolyticus (strain ATCC 43068 / DSM 8971 / 11B) protein is N-acetyl-gamma-glutamyl-phosphate reductase.